Here is a 244-residue protein sequence, read N- to C-terminus: Orotidine 5'-phosphate decarboxylase (244 aa).

Substrate is bound by residues Asp-20, Lys-42, 70–79 (DLKFFDIPAT), Thr-125, Arg-186, Gln-195, Gly-215, and Arg-216. The active-site Proton donor is Lys-72.

The protein belongs to the OMP decarboxylase family. Type 1 subfamily. Homodimer.

It carries out the reaction orotidine 5'-phosphate + H(+) = UMP + CO2. It participates in pyrimidine metabolism; UMP biosynthesis via de novo pathway; UMP from orotate: step 2/2. In terms of biological role, catalyzes the decarboxylation of orotidine 5'-monophosphate (OMP) to uridine 5'-monophosphate (UMP). This is Orotidine 5'-phosphate decarboxylase from Xylella fastidiosa (strain M12).